The sequence spans 144 residues: C-type isolectin Sp-CL4 (144 aa).

The C-type lectin domain occupies 27 to 144; sequence DENRKVKYFE…CSEKLPFMCA (118 aa). Intrachain disulfides connect Cys48-Cys143 and Cys119-Cys135.

It belongs to the true venom lectin family. Post-translationally, glycosylated with a carbohydrate of 383 Da. As to expression, expressed by the venom gland.

The protein resides in the secreted. The role of this hemagglutinin in the venom is unknown, because it is masked by the high venom hemolytic activity. Lectin with specificity to galactose. Induces hemagglutination. The protein is C-type isolectin Sp-CL4 of Scorpaena plumieri (Spotted scorpionfish).